Here is a 297-residue protein sequence, read N- to C-terminus: N-acetylmuramoyl-L-alanine amidase XlyA (297 aa).

A signal peptide spans 1–44 (MVNIIQDFIPVGANNRPGYAMTPLYITVHNTANTAVGADAAAHA). In terms of domain architecture, N-acetylmuramoyl-L-alanine amidase spans 45-140 (RYLKNPDTTT…KYWSGKECPR (96 aa)). The region spanning 159–203 (QTYVVKQGDTLTSIARAFGVTVAQLQEWNNIEDPNLIRVGQVLIV) is the LysM domain.

The protein belongs to the N-acetylmuramoyl-L-alanine amidase 2 family.

The protein localises to the secreted. The catalysed reaction is Hydrolyzes the link between N-acetylmuramoyl residues and L-amino acid residues in certain cell-wall glycopeptides.. Functionally, autolysins are involved in some important biological processes such as cell separation, cell-wall turnover, competence for genetic transformation, formation of the flagella and sporulation. The polypeptide is N-acetylmuramoyl-L-alanine amidase XlyA (xlyA) (Bacillus subtilis (strain 168)).